The sequence spans 216 residues: Adenylate kinase (216 aa).

Gly-13–Thr-18 provides a ligand contact to ATP. Positions Thr-33–Val-66 are NMP. AMP-binding positions include Thr-34, Arg-39, Asp-64–Val-66, Gly-89–Arg-92, and Gln-96. An LID region spans residues Gly-125–Asp-162. Residue Arg-126 participates in ATP binding. Positions 129, 132, 149, and 152 each coordinate Zn(2+). AMP is bound by residues Arg-159 and Arg-170. Gln-198 lines the ATP pocket.

This sequence belongs to the adenylate kinase family. In terms of assembly, monomer.

It localises to the cytoplasm. The catalysed reaction is AMP + ATP = 2 ADP. It participates in purine metabolism; AMP biosynthesis via salvage pathway; AMP from ADP: step 1/1. Its function is as follows. Catalyzes the reversible transfer of the terminal phosphate group between ATP and AMP. Plays an important role in cellular energy homeostasis and in adenine nucleotide metabolism. In Haloarcula marismortui (strain ATCC 43049 / DSM 3752 / JCM 8966 / VKM B-1809) (Halobacterium marismortui), this protein is Adenylate kinase.